We begin with the raw amino-acid sequence, 305 residues long: Putative lipid kinase SAB0675c (305 aa).

Positions 3–139 (NKYTHGVLFY…YDVIKINNQY (137 aa)) constitute a DAGKc domain. ATP is bound by residues serine 44, 74 to 80 (GDGTVNE), and threonine 101. The Mg(2+) site is built by serine 220, aspartate 223, and glutamate 225. Residue glutamate 281 is the Proton acceptor of the active site.

Belongs to the diacylglycerol/lipid kinase family. It depends on Mg(2+) as a cofactor.

In terms of biological role, may catalyze the ATP-dependent phosphorylation of lipids other than diacylglycerol (DAG). The sequence is that of Putative lipid kinase SAB0675c from Staphylococcus aureus (strain bovine RF122 / ET3-1).